Reading from the N-terminus, the 218-residue chain is Protein Nef (218 aa).

The disordered stretch occupies residues 1–44; that stretch reads MGGKWSKMAGWSTVRERMRRAEPARERMRRAEPRAEPAADGVGA. Glycine 2 carries N-myristoyl glycine; by host lipidation. Phosphoserine; by host is present on serine 6. Positions 14–37 are enriched in basic and acidic residues; the sequence is VRERMRRAEPARERMRRAEPRAEP. An acidic; interacts with host PACS1 and PACS2; stabilizes the interaction of NEF/MHC-I with host AP1M1; necessary for MHC-I internalization region spans residues 74-77; the sequence is EDEE. An SH3-binding; interaction with Src family tyrosine kinases region spans residues 81-90; it reads PVKPQVPLRP. A PxxP; stabilizes the interaction of NEF/MHC-I with host AP1M1; necessary for MHC-I internalization motif is present at residues 84–87; that stretch reads PQVP. Positions 120–136 are mediates dimerization, Nef-PTE1 interaction; that stretch reads DILDLWVYHTQGYFPDW. Residues 160-192 form a binding to ATP6V1H region; it reads VEPEKIEEANEGENNSLLHPMSQHGMDDPEREV. A Dileucine internalization motif; necessary for CD4 internalization motif is present at residues 176–177; it reads LL. A Diacidic; necessary for CD4 internalization motif is present at residues 186–187; that stretch reads DD.

It belongs to the lentivirus primate group Nef protein family. In terms of assembly, monomer; cytosolic form. Homodimer; membrane bound form. Interacts with Nef associated p21-activated kinase (PAK2); this interaction activates PAK2. Associates with the Nef-MHC-I-AP1 complex; this complex is required for MHC-I internalization. Interacts (via C-terminus) with host PI3-kinase. Interacts with host PACS1; this interaction seems to be weak. Interacts with host PACS2. Interacts with host LCK and MAPK3; these interactions inhibit the kinase activity of the latter. Interacts with host ATP6V1H; this interaction may play a role in CD4 endocytosis. Associates with the CD4-Nef-AP2 complex; this complex is required for CD4 internalization. Interacts with host AP2 subunit alpha and AP2 subunit sigma2. Interacts with TCR-zeta chain; this interaction up-regulates the Fas ligand (FasL) surface expression. Interacts with host HCK, LYN, and SRC; these interactions activate the Src family kinases. Interacts with MAP3K5; this interaction inhibits the Fas and TNFR-mediated death signals. Interacts with beta-COP and PTE1. Interacts with human RACK1; this increases Nef phosphorylation by PKC. Interacts with TP53; this interaction decreases the half-life of TP53, protecting the infected cell against p53-mediated apoptosis. In terms of processing, the virion-associated Nef proteins are cleaved by the viral protease to release the soluble C-terminal core protein. Nef is probably cleaved concomitantly with viral structural proteins on maturation of virus particles. Myristoylated. Post-translationally, phosphorylated on serine residues, probably by host PKCdelta and theta.

Its subcellular location is the host cell membrane. The protein resides in the virion. The protein localises to the secreted. It localises to the host Golgi apparatus membrane. Its function is as follows. Factor of infectivity and pathogenicity, required for optimal virus replication. Alters numerous pathways of T-lymphocyte function and down-regulates immunity surface molecules in order to evade host defense and increase viral infectivity. Alters the functionality of other immunity cells, like dendritic cells, monocytes/macrophages and NK cells. In infected CD4(+) T-lymphocytes, down-regulates the surface MHC-I, mature MHC-II, CD4, CD28, CCR5 and CXCR4 molecules. Mediates internalization and degradation of host CD4 through the interaction of with the cytoplasmic tail of CD4, the recruitment of AP-2 (clathrin adapter protein complex 2), internalization through clathrin coated pits, and subsequent transport to endosomes and lysosomes for degradation. Diverts host MHC-I molecules to the trans-Golgi network-associated endosomal compartments by an endocytic pathway to finally target them for degradation. MHC-I down-regulation may involve AP-1 (clathrin adapter protein complex 1) or possibly Src family kinase-ZAP70/Syk-PI3K cascade recruited by PACS2. In consequence infected cells are masked for immune recognition by cytotoxic T-lymphocytes. Decreasing the number of immune receptors also prevents reinfection by more HIV particles (superinfection). Down-regulates host SERINC3 and SERINC5 thereby excluding these proteins from the viral particles. Virion infectivity is drastically higher when SERINC3 or SERINC5 are excluded from the viral envelope, because these host antiviral proteins impair the membrane fusion event necessary for subsequent virion penetration. In terms of biological role, bypasses host T-cell signaling by inducing a transcriptional program nearly identical to that of anti-CD3 cell activation. Interaction with TCR-zeta chain up-regulates the Fas ligand (FasL). Increasing surface FasL molecules and decreasing surface MHC-I molecules on infected CD4(+) cells send attacking cytotoxic CD8+ T-lymphocytes into apoptosis. Functionally, plays a role in optimizing the host cell environment for viral replication without causing cell death by apoptosis. Protects the infected cells from apoptosis in order to keep them alive until the next virus generation is ready to strike. Inhibits the Fas and TNFR-mediated death signals by blocking MAP3K5/ASK1. Decreases the half-life of TP53, protecting the infected cell against p53-mediated apoptosis. Inhibits the apoptotic signals regulated by the Bcl-2 family proteins through the formation of a Nef/PI3-kinase/PAK2 complex that leads to activation of PAK2 and induces phosphorylation of host BAD. Its function is as follows. Extracellular Nef protein targets CD4(+) T-lymphocytes for apoptosis by interacting with CXCR4 surface receptors. The polypeptide is Protein Nef (Homo sapiens (Human)).